A 61-amino-acid chain; its full sequence is Beta-insect depressant toxin BmKIT2 (61 aa).

The region spanning 1-61 (DGYIKGKSGC…TWKSESNTCG (61 aa)) is the LCN-type CS-alpha/beta domain. 4 cysteine pairs are disulfide-bonded: cysteine 10–cysteine 60, cysteine 14–cysteine 35, cysteine 21–cysteine 42, and cysteine 25–cysteine 44. Glycine 61 is modified (glycine amide).

It belongs to the long (4 C-C) scorpion toxin superfamily. Sodium channel inhibitor family. Beta subfamily. In terms of tissue distribution, expressed by the venom gland.

It localises to the secreted. On insects, this depressant beta-toxins cause a transient contraction paralysis followed by a slow flaccid paralysis. They bind voltage-independently at site-4 of sodium channels (Nav) and shift the voltage of activation toward more negative potentials thereby affecting sodium channel activation and promoting spontaneous and repetitive firing. This toxin is active against insects and mammals. It is capable of binding to not only cockroach neuronal membranes, but also rat cerebrocortical and hippocampal synaptosomes. This toxin also has potent peripheral and central suppressive effects on rat nociceptive spontaneous responses, thermal hyperalgesia and spinal c-Fos expression induced by formalin and carrageenan, which may be derived from its modulation on the activity of sodium channels of the neurons. Administration of BmKIT2 into rat brain can also suppress the epileptic seizures significantly. This is Beta-insect depressant toxin BmKIT2 from Olivierus martensii (Manchurian scorpion).